A 507-amino-acid chain; its full sequence is Cell cycle serine/threonine-protein kinase hsk1 (507 aa).

Residue serine 22 is modified to Phosphoserine. One can recognise a Protein kinase domain in the interval 68–433 (YRLIEKIGEG…AEEALDHDFL (366 aa)). Residues 74 to 82 (IGEGTFSSV) and lysine 129 each bind ATP. Catalysis depends on aspartate 216, which acts as the Proton acceptor. Phosphothreonine is present on threonine 291. Positions 475–507 (FKEQEETDEPTSLSKRKRSIDEILPNDALQDGA) are disordered. At serine 493 the chain carries Phosphoserine.

This sequence belongs to the protein kinase superfamily. Ser/Thr protein kinase family. CDC7 subfamily. In terms of assembly, heterodimer with the regulatory subunit him1/dfp1. May form homooligomeric complexes. Interacts with mcm10. Post-translationally, autophosphorylated. Phosphorylated by cds1 in vitro.

Its subcellular location is the nucleus. The enzyme catalyses L-seryl-[protein] + ATP = O-phospho-L-seryl-[protein] + ADP + H(+). It catalyses the reaction L-threonyl-[protein] + ATP = O-phospho-L-threonyl-[protein] + ADP + H(+). Its activity is regulated as follows. Phosphorylation of exogenous substrates activated by Dfp1. In terms of biological role, required for G1/S transition. Plays a role in DNA replication checkpoint signaling through regulating rad3 and cds1. Involved in the maintenance of mitotic chromosome structures during S phase through regulating the function of rad21. Required for initiation of mitotic DNA replication through phosphorylating mcm2/cdc19. Required for genome integrity. This Schizosaccharomyces pombe (strain 972 / ATCC 24843) (Fission yeast) protein is Cell cycle serine/threonine-protein kinase hsk1 (hsk1).